The following is a 105-amino-acid chain: Small ribosomal subunit protein uS10 (105 aa).

It belongs to the universal ribosomal protein uS10 family. As to quaternary structure, part of the 30S ribosomal subunit.

Its function is as follows. Involved in the binding of tRNA to the ribosomes. The polypeptide is Small ribosomal subunit protein uS10 (Synechocystis sp. (strain ATCC 27184 / PCC 6803 / Kazusa)).